We begin with the raw amino-acid sequence, 917 residues long: MDTCVFPLVVLWISMRITSTLDEVPIGGIFDSRSVQALTAFRHEIHMFNRAYSHVYRYKLKNDTTILDVTDSFAVSNALCHHLSRGDLAIFGVSNASSLATIQSYTDTFNVPFVTISMAQNNSHNGSYQIYMRPMYINALVDVIVHYRWEKVAFYYDSDEGLVRLQQLFQATNKYDKMIISIDTKRITSVENGYHMLKELHLMDPEMEHRVLLDVRTDKAEQIILKVMNDSKINNAKFHFLLGDLGMLEINTTHFKIGGVNITGFQLVDPFNSTSELFISTWSSLDPVYWPGAGTNHVNYEAALAADSVRLFKSAFGSILQKDPNFLRRSRSGTAGKSMKCTDDSEIKTGHGQMILEEMKKVKFEGVTGHVAFNEQGHRKDFTLGVYNVAMTRGTAKIGYWNEREGKLHAHNPRLFQNNSSDMNRTRIVTTIIKEPYVMVNNVIRDGKPLVGNEPVEGFCIDLTKAVAEKVGFDFVIQFVKDGSYGSVLSNGTWDGIVGELIRHEADMAIAPFTITADRSRVIDFTKPFMSLGISIMIKRPQPAGKHFFSFMEPLSSEIWMCIVFAYIGVSVVLFLVSRFSPNEWHLSEAHHSYIANDFSISNSLWFSLGAFMQQGCDISPRSMSGRIVGSVWWFFTLIIISSYTANLAAFLTVERMLTPIDSAEDLARQTEIQYGTIMSGSTKAFFKNSQFQTYQRMWAYMTSAQPSVFVKTHEEGIQRVRQSNGKYAYLTESSTIDYVSNRKPCDTLKVGSNLNSDGFGIGTPVGSDLRDKLNFSVLELRENGDLAKWEKIWFDRGECPQHSSNKEGAQSALTLANVAGIFYILIGGLVVAVLSAAFEFLYKSRMDSRKSRMSFGSALRTKARLSFKGHIDSEQKTTGNGTRRRSHNSVTYTYTGPTNVMGGSHAFEDSNTHTEV.

A signal peptide spans 1-19; that stretch reads MDTCVFPLVVLWISMRITS. Topologically, residues 20-556 are extracellular; the sequence is TLDEVPIGGI…HFFSFMEPLS (537 aa). 12 N-linked (GlcNAc...) asparagine glycosylation sites follow: asparagine 62, asparagine 95, asparagine 121, asparagine 125, asparagine 229, asparagine 251, asparagine 261, asparagine 272, asparagine 418, asparagine 419, asparagine 424, and asparagine 491. A helical transmembrane segment spans residues 557 to 577; that stretch reads SEIWMCIVFAYIGVSVVLFLV. The Cytoplasmic portion of the chain corresponds to 578-631; the sequence is SRFSPNEWHLSEAHHSYIANDFSISNSLWFSLGAFMQQGCDISPRSMSGRIVGS. A helical transmembrane segment spans residues 632–652; sequence VWWFFTLIIISSYTANLAAFL. Topologically, residues 653-818 are extracellular; sequence TVERMLTPID…GAQSALTLAN (166 aa). A glycan (N-linked (GlcNAc...) asparagine) is linked at asparagine 775. A helical transmembrane segment spans residues 819-839; the sequence is VAGIFYILIGGLVVAVLSAAF. Residues 840–917 are Cytoplasmic-facing; it reads EFLYKSRMDS…FEDSNTHTEV (78 aa). A disordered region spans residues 871-896; it reads HIDSEQKTTGNGTRRRSHNSVTYTYT.

Belongs to the glutamate-gated ion channel (TC 1.A.10.1) family.

It localises to the cell membrane. The protein localises to the postsynaptic cell membrane. Functionally, receptor for glutamate. L-glutamate acts as an excitatory neurotransmitter at many synapses in the central nervous system. The postsynaptic actions of Glu are mediated by a variety of receptors. The polypeptide is Glutamate receptor (Lymnaea stagnalis (Great pond snail)).